The following is a 237-amino-acid chain: Redox-sensing transcriptional repressor Rex (237 aa).

Positions 45–84 (LYYRELHRLLAAGESSTNSRDLGAMVNVSPAVVRRDLSSI) form a DNA-binding region, H-T-H motif. An NAD(+)-binding site is contributed by 119–124 (GVGSLG).

The protein belongs to the transcriptional regulatory Rex family. Homodimer.

Its subcellular location is the cytoplasm. Its function is as follows. Modulates transcription in response to changes in cellular NADH/NAD(+) redox state. This Rhodopirellula baltica (strain DSM 10527 / NCIMB 13988 / SH1) protein is Redox-sensing transcriptional repressor Rex.